We begin with the raw amino-acid sequence, 240 residues long: Lysoplasmalogenase TMEM86A (240 aa).

Over 1-21 (MVSPVTVVKSEGPKLVPFFKA) the chain is Cytoplasmic. A helical membrane pass occupies residues 22 to 42 (TCVYFVLWLPSSSPSWVSTLI). Position 43 (Lys43) is a topological domain, extracellular. The chain crosses the membrane as a helical span at residues 44-64 (CLPIFCLWLFLLAHGLGFLLA). Topologically, residues 65–70 (HPSATR) are cytoplasmic. The helical transmembrane segment at 71–91 (IFVGLVFSAVGDAFLIWQDQG) threads the bilayer. Tyr92 is a topological domain (extracellular). A helical transmembrane segment spans residues 93–113 (FVHGLLMFAVTHMFYASAFGM). At 114-115 (QP) the chain is on the cytoplasmic side. Residues 116 to 136 (LALRTGLVMAALSGLCYALLY) form a helical membrane-spanning segment. The Extracellular portion of the chain corresponds to 137 to 138 (PC). The chain crosses the membrane as a helical span at residues 139 to 159 (LSGAFTYLVGVYVALIGFMGW). The Cytoplasmic segment spans residues 160–174 (RAMAGLRLAGADWRW). The chain crosses the membrane as a helical span at residues 175-195 (TELAAGSGALFFIISDLTIAL). The Extracellular segment spans residues 196 to 206 (NKFCFPVPYSR). The chain crosses the membrane as a helical span at residues 207 to 227 (ALIMSTYYVAQMLVALSAVES). Residues 228 to 240 (REPVEHYRLTKAN) lie on the Cytoplasmic side of the membrane.

This sequence belongs to the TMEM86 family. In terms of tissue distribution, expressed in the macrophages.

Its subcellular location is the endoplasmic reticulum membrane. The catalysed reaction is a 1-O-(1Z-alkenyl)-sn-glycero-3-phosphocholine + H2O = a 2,3-saturated aldehyde + sn-glycerol 3-phosphocholine. It carries out the reaction a 1-O-(1Z-alkenyl)-sn-glycero-3-phosphoethanolamine + H2O = a 2,3-saturated aldehyde + sn-glycero-3-phosphoethanolamine. Functionally, catalyzes the hydrolysis of the vinyl ether bond of choline or ethanolamine lysoplasmalogens, forming fatty aldehyde and glycerophosphocholine or glycerophosphoethanolamine, respectively and is specific for the sn-2-deacylated (lyso) form of plasmalogen. Plays an important role in lysoplasmalogen metabolism in the adipocyte tissue and macrophages. In Homo sapiens (Human), this protein is Lysoplasmalogenase TMEM86A (TMEM86A).